Consider the following 140-residue polypeptide: Beta/delta-urticatoxin-De2a (140 aa).

The signal sequence occupies residues 1-18 (MKTSTALVLLLALTATSA). Positions 19 to 78 (SSGDHQFIDEQNIMNVAEGKNVISSLSSSGGGDDAAAIMESVLVNGGNRKMVFMMVSGSQ) are excised as a propeptide. Cystine bridges form between cysteine 81–cysteine 95, cysteine 88–cysteine 100, cysteine 94–cysteine 108, cysteine 113–cysteine 127, cysteine 120–cysteine 131, and cysteine 126–cysteine 139.

This sequence belongs to the urticatoxin-2 family. In terms of tissue distribution, expressed in trichomes, that are stiff epidermal hairs located on the surface of petioles and leaves.

It localises to the secreted. Plant defense neurotoxin that causes pain and systemic symptoms in mammals via modulation of voltage-gated sodium channels (Nav). Potent modulator of human Nav1.5/SCN5A (EC(50)=55 nM), Nav1.6/SCN8A (EC(50)=0.86 nM), and Nav1.7/SCN9A (EC(50)=208 nM), where it shifts the activation threshold to more negative potentials and delays fast inactivation. Also shifts the voltage-dependence of steady-state fast inactivation of Nav1.6/SCN8A, but not that of Nav1.5/SCN5A or Nav1.7/SCN9A. On Nav1.7/SCN9A, principally acts by binding to extracellular loops of domain IV (Nav site 3). In vivo, intraplantar injection into mice causes numerous dose-dependent, immediate, and long-lasting spontaneous pain behaviors, while no swelling is observed in the injected paw. At the highest doses tested, systemic symptoms including hypokinesia and hypersalivation are observed. The chain is Beta/delta-urticatoxin-De2a from Dendrocnide excelsa (Giant stinging tree).